Here is a 198-residue protein sequence, read N- to C-terminus: Nascent polypeptide-associated complex subunit alpha (198 aa).

The 66-residue stretch at 48–113 (ITRVVLKRTR…QAAAETGSVS (66 aa)) folds into the NAC-A/B domain. The 40-residue stretch at 159 to 198 (LEDSDIKLVMEQANVSRNKAINGLKKNDSDVVNTIMDLCK) folds into the UBA domain.

It belongs to the NAC-alpha family. Part of the nascent polypeptide-associated complex (NAC), consisting of EGD2 and EGD1. NAC associates with ribosomes via EGD1.

The protein localises to the cytoplasm. It is found in the nucleus. Its function is as follows. Component of the nascent polypeptide-associated complex (NAC), a dynamic component of the ribosomal exit tunnel, protecting the emerging polypeptides from interaction with other cytoplasmic proteins to ensure appropriate nascent protein targeting. The NAC complex also promotes mitochondrial protein import by enhancing productive ribosome interactions with the outer mitochondrial membrane and blocks the inappropriate interaction of ribosomes translating non-secretory nascent polypeptides with translocation sites in the membrane of the endoplasmic reticulum. EGD2 may also be involved in transcription regulation. This chain is Nascent polypeptide-associated complex subunit alpha (EGD2), found in Yarrowia lipolytica (strain CLIB 122 / E 150) (Yeast).